A 289-amino-acid polypeptide reads, in one-letter code: Bifunctional protein FolD 2 (289 aa).

Residues 162–164 (GRS), Ser-187, and Ile-228 each bind NADP(+).

It belongs to the tetrahydrofolate dehydrogenase/cyclohydrolase family. In terms of assembly, homodimer.

The catalysed reaction is (6R)-5,10-methylene-5,6,7,8-tetrahydrofolate + NADP(+) = (6R)-5,10-methenyltetrahydrofolate + NADPH. It carries out the reaction (6R)-5,10-methenyltetrahydrofolate + H2O = (6R)-10-formyltetrahydrofolate + H(+). The protein operates within one-carbon metabolism; tetrahydrofolate interconversion. Its function is as follows. Catalyzes the oxidation of 5,10-methylenetetrahydrofolate to 5,10-methenyltetrahydrofolate and then the hydrolysis of 5,10-methenyltetrahydrofolate to 10-formyltetrahydrofolate. In Deinococcus geothermalis (strain DSM 11300 / CIP 105573 / AG-3a), this protein is Bifunctional protein FolD 2.